The following is a 1025-amino-acid chain: MMQPTPAPSSAPGSPQRTQAEPEMETPSYPQPPQNVGTAPFSVLVKLFEKLATERKQERRRKLLDAWFRHWRREKGFDLYPVLRLLLPQKDRDRAVYGLKEKNLAKTYIKLIPLGMRDPDAIRLLNWKKPTERDKSSGDFPQVLCEVVSKRSSVIEGTLTIDELNEILDDIAKNMGKSDVQSKILRRIYNNSTADEQRWIIRIILKDMNISVKETTVFAVFHPDAQDLYNTCSDLKKVAWELWDPSRRLNAKDKEIQIFHAFAPMLCKRPTRKIEETVKAMGGSKFIIEEKLDGERMQLHKRGNEYFYCSRKGKDYTYLYGKHIGAGSLTPFIDSAFDSRIDDIILDGEMLVWDPVSERNLPFGTLKTAALDRSKKENNPRPCFKVFDLLYLNGMSLLDKTVKFRKNNLRHCIKPIPGRIEFVEEYQGETANDIRKRMEQVMENRGEGLVIKHPKAKYILNGRNTDWIKVKPEYMDNMGETVDVLVVAGNYGSGKRGGGVSTLICAVMDDRRPDSDDEPKYSSFVRIGTGLSFADYVWVRSKPWKVWDPKNPPEFLQTAKKGQEDKGDVYLEPEDSFILKVKAAEITPSDQYHMGFTMRFPRALAIRDDLSIADCMTATEVFESLKSERKRKMEDDAGITTKKRKTTVKKVALLPEYSGPNLKKVAVKTDIFNGMKFVVFSDPKSRTGEADKKELMKTIHANGGTCSQIVNKNSEAIVIYGGSITPYDLKLVIDKGIHDVIKPSWITDSVTLGEPAPFKKKYFFHATEERKYADEYNEDDGEEEGAVPSADEQERDVKSGTVEPGSETEDEDEEQAPEIKEEQDGELHEWLKVDDRKSPALPAHDEEDSVTEDDSDNADVADEEEPDLDDWFQVKGETEDEGAGALATASRHRETTPDVDGDVKMGESEEAMDYDPDVIFKHLCFYLDSPANAQRHGMATRPKYEAAITKSFEEVEKLIKDNGGKIVDLDEPKLTHVVLDKRDDSRRVELMKRTSKPRRRHLVLSDYIEACIDEGTLLDEEEFAP.

Positions 1–36 (MMQPTPAPSSAPGSPQRTQAEPEMETPSYPQPPQNV) are disordered. ATP-binding residues include Glu289, Lys291, Leu292, Arg296, Glu349, Phe387, Glu447, Lys452, Lys469, and Lys471. The active-site N6-AMP-lysine intermediate is the Lys291. Residue Glu349 participates in Mg(2+) binding. Glu447 contributes to the Mg(2+) binding site. The BRCT 1 domain occupies 667–763 (VKTDIFNGMK…EPAPFKKKYF (97 aa)). The tract at residues 773-904 (ADEYNEDDGE…TTPDVDGDVK (132 aa)) is disordered. Composition is skewed to acidic residues over residues 775–785 (EYNEDDGEEEG) and 806–816 (SETEDEDEEQA). Residues 817 to 838 (PEIKEEQDGELHEWLKVDDRKS) show a composition bias toward basic and acidic residues. Over residues 845–870 (DEEDSVTEDDSDNADVADEEEPDLDD) the composition is skewed to acidic residues. The segment covering 891 to 904 (RHRETTPDVDGDVK) has biased composition (basic and acidic residues). Residues 915 to 1025 (DPDVIFKHLC…TLLDEEEFAP (111 aa)) form the BRCT 2 domain.

The protein belongs to the ATP-dependent DNA ligase family. It depends on Mg(2+) as a cofactor.

The protein resides in the nucleus. The enzyme catalyses ATP + (deoxyribonucleotide)n-3'-hydroxyl + 5'-phospho-(deoxyribonucleotide)m = (deoxyribonucleotide)n+m + AMP + diphosphate.. DNA ligase involved in DNA non-homologous end joining (NHEJ); required for double-strand break (DSB) repair. The chain is DNA ligase 4 (LIG4) from Coprinopsis cinerea (Inky cap fungus).